The primary structure comprises 178 residues: Probetacellulin (178 aa).

The N-terminal stretch at 1–31 (MDRAARCSGASSLPLLLALALGLVILHCVVA) is a signal peptide. Topologically, residues 32–118 (DGNSTRSPET…LFYLRGDRGQ (87 aa)) are extracellular. N-linked (GlcNAc...) asparagine glycosylation occurs at asparagine 34. The EGF-like domain occupies 65–105 (HFSRCPKQYKHYCIKGRCRFVVAEQTPSCVCDEGYIGARCE). 3 disulfide bridges follow: cysteine 69–cysteine 82, cysteine 77–cysteine 93, and cysteine 95–cysteine 104. Positions 112-178 (LRGDRGQILV…NEDIEETNIA (67 aa)) are cleaved as a propeptide — removed in mature form. Residues 119 to 139 (ILVICLIAVMVVFIILVIGVC) traverse the membrane as a helical segment. The Cytoplasmic portion of the chain corresponds to 140-178 (TCCHPLRKRRKRKKKEEEMETLGKDITPINEDIEETNIA).

Monomer. Interacts with EGFR and ERBB4. In terms of tissue distribution, synthesized in several tissues and tumor cells. Predominantly expressed in pancreas and small intestine.

The protein resides in the secreted. It localises to the extracellular space. Its subcellular location is the cell membrane. Functionally, growth factor that binds to EGFR, ERBB4 and other EGF receptor family members. Potent mitogen for retinal pigment epithelial cells and vascular smooth muscle cells. The chain is Probetacellulin (BTC) from Homo sapiens (Human).